Reading from the N-terminus, the 633-residue chain is Pescadillo homolog (633 aa).

The BRCT domain maps to 321-414 (RLRTLFKGLK…QLLPTNKYFL (94 aa)). Disordered regions lie at residues 450-470 (HAQSEDESEDDAAAEEEDTVE) and 490-567 (KKYG…LQAR). 2 positions are modified to phosphoserine: Ser-453 and Ser-457. Acidic residues-rich tracts occupy residues 454 to 470 (EDESEDDAAAEEEDTVE) and 498 to 526 (VNEDEEDSDEEDFDGEEQESDDDDEEELD). Residues 527-538 (EKEKRLLEEKQK) are compositionally biased toward basic and acidic residues. Residues 545–554 (KVHKVNKRQV) show a composition bias toward basic residues. Over residues 555–564 (HKAEVDEHRL) the composition is skewed to basic and acidic residues. Positions 593-626 (LLRKKRRTIETDAKEAKKLAKREARKAAAAAAAA) form a coiled coil.

The protein belongs to the pescadillo family.

It is found in the nucleus. It localises to the nucleolus. Its subcellular location is the nucleoplasm. Functionally, required for maturation of ribosomal RNAs and formation of the large ribosomal subunit. The protein is Pescadillo homolog of Drosophila virilis (Fruit fly).